Consider the following 98-residue polypeptide: Co-chaperonin GroES (98 aa).

This sequence belongs to the GroES chaperonin family. As to quaternary structure, heptamer of 7 subunits arranged in a ring. Interacts with the chaperonin GroEL.

Its subcellular location is the cytoplasm. Functionally, together with the chaperonin GroEL, plays an essential role in assisting protein folding. The GroEL-GroES system forms a nano-cage that allows encapsulation of the non-native substrate proteins and provides a physical environment optimized to promote and accelerate protein folding. GroES binds to the apical surface of the GroEL ring, thereby capping the opening of the GroEL channel. This Coprothermobacter proteolyticus (strain ATCC 35245 / DSM 5265 / OCM 4 / BT) protein is Co-chaperonin GroES.